The sequence spans 349 residues: Anthranilate phosphoribosyltransferase (349 aa).

Residues Gly82, 85-86, 92-95, 110-118, and Ser122 each bind 5-phospho-alpha-D-ribose 1-diphosphate; these read GD, NVST, and KHGNRAVSG. Residue Gly82 participates in anthranilate binding. Ser94 provides a ligand contact to Mg(2+). Residue Asn113 participates in anthranilate binding. Arg168 is a binding site for anthranilate. Mg(2+) contacts are provided by Asp227 and Glu228.

Belongs to the anthranilate phosphoribosyltransferase family. In terms of assembly, homodimer. The cofactor is Mg(2+).

It carries out the reaction N-(5-phospho-beta-D-ribosyl)anthranilate + diphosphate = 5-phospho-alpha-D-ribose 1-diphosphate + anthranilate. Its pathway is amino-acid biosynthesis; L-tryptophan biosynthesis; L-tryptophan from chorismate: step 2/5. In terms of biological role, catalyzes the transfer of the phosphoribosyl group of 5-phosphorylribose-1-pyrophosphate (PRPP) to anthranilate to yield N-(5'-phosphoribosyl)-anthranilate (PRA). The protein is Anthranilate phosphoribosyltransferase of Pseudomonas putida (strain ATCC 47054 / DSM 6125 / CFBP 8728 / NCIMB 11950 / KT2440).